Consider the following 129-residue polypeptide: Small ribosomal subunit protein uS11 (129 aa).

The interval 107-129 (IEDVTPVPHDSIRGKGGRRGRRV) is disordered.

This sequence belongs to the universal ribosomal protein uS11 family. In terms of assembly, part of the 30S ribosomal subunit.

Its function is as follows. Located on the platform of the 30S subunit. In Methanoculleus marisnigri (strain ATCC 35101 / DSM 1498 / JR1), this protein is Small ribosomal subunit protein uS11.